A 177-amino-acid polypeptide reads, in one-letter code: ATP-dependent protease subunit HslV (177 aa).

Threonine 2 is a catalytic residue. Na(+) contacts are provided by glycine 157, cysteine 160, and threonine 163.

This sequence belongs to the peptidase T1B family. HslV subfamily. A double ring-shaped homohexamer of HslV is capped on each side by a ring-shaped HslU homohexamer. The assembly of the HslU/HslV complex is dependent on binding of ATP.

It is found in the cytoplasm. The enzyme catalyses ATP-dependent cleavage of peptide bonds with broad specificity.. Its activity is regulated as follows. Allosterically activated by HslU binding. Its function is as follows. Protease subunit of a proteasome-like degradation complex believed to be a general protein degrading machinery. The protein is ATP-dependent protease subunit HslV of Aeromonas hydrophila subsp. hydrophila (strain ATCC 7966 / DSM 30187 / BCRC 13018 / CCUG 14551 / JCM 1027 / KCTC 2358 / NCIMB 9240 / NCTC 8049).